A 178-amino-acid chain; its full sequence is ATP-dependent protease subunit HslV (178 aa).

T7 is a catalytic residue. Na(+) contacts are provided by G162, C165, and T168.

Belongs to the peptidase T1B family. HslV subfamily. In terms of assembly, a double ring-shaped homohexamer of HslV is capped on each side by a ring-shaped HslU homohexamer. The assembly of the HslU/HslV complex is dependent on binding of ATP.

The protein localises to the cytoplasm. The catalysed reaction is ATP-dependent cleavage of peptide bonds with broad specificity.. Its activity is regulated as follows. Allosterically activated by HslU binding. Protease subunit of a proteasome-like degradation complex believed to be a general protein degrading machinery. The protein is ATP-dependent protease subunit HslV of Burkholderia ambifaria (strain MC40-6).